A 618-amino-acid polypeptide reads, in one-letter code: 1-deoxy-D-xylulose-5-phosphate synthase (618 aa).

Residues H72 and 113–115 (GHA) each bind thiamine diphosphate. D144 contributes to the Mg(2+) binding site. Residues 145-146 (GA), N173, H284, and E359 each bind thiamine diphosphate. N173 serves as a coordination point for Mg(2+).

The protein belongs to the transketolase family. DXPS subfamily. As to quaternary structure, homodimer. Requires Mg(2+) as cofactor. Thiamine diphosphate serves as cofactor.

The enzyme catalyses D-glyceraldehyde 3-phosphate + pyruvate + H(+) = 1-deoxy-D-xylulose 5-phosphate + CO2. It functions in the pathway metabolic intermediate biosynthesis; 1-deoxy-D-xylulose 5-phosphate biosynthesis; 1-deoxy-D-xylulose 5-phosphate from D-glyceraldehyde 3-phosphate and pyruvate: step 1/1. In terms of biological role, catalyzes the acyloin condensation reaction between C atoms 2 and 3 of pyruvate and glyceraldehyde 3-phosphate to yield 1-deoxy-D-xylulose-5-phosphate (DXP). This is 1-deoxy-D-xylulose-5-phosphate synthase from Dictyoglomus thermophilum (strain ATCC 35947 / DSM 3960 / H-6-12).